Reading from the N-terminus, the 1320-residue chain is Transcriptional activator MN1 (1320 aa).

An N-acetylmethionine modification is found at methionine 1. 9 disordered regions span residues methionine 1 to threonine 26, phenylalanine 92 to proline 121, proline 147 to proline 219, leucine 231 to isoleucine 411, serine 423 to leucine 442, asparagine 474 to leucine 615, serine 629 to leucine 819, glycine 840 to isoleucine 1150, and proline 1247 to glutamine 1273. The segment covering histidine 98–histidine 113 has biased composition (basic residues). 2 stretches are compositionally biased toward low complexity: residues serine 202–serine 214 and glutamine 291–glutamine 309. Residues methionine 338 to glycine 366 are compositionally biased toward pro residues. Residues phenylalanine 498–histidine 514 are compositionally biased toward pro residues. Low complexity-rich tracts occupy residues glutamine 523–glutamine 550 and arginine 564–leucine 578. Composition is skewed to gly residues over residues glycine 582–glycine 596 and glutamine 701–glycine 710. Residues serine 759–serine 768 are compositionally biased toward low complexity. Residues alanine 769–alanine 784 show a composition bias toward gly residues. 2 stretches are compositionally biased toward low complexity: residues serine 798 to serine 809 and glycine 895 to glycine 905. The segment covering aspartate 914–asparagine 930 has biased composition (polar residues). Phosphoserine occurs at positions 950 and 954. The segment covering glycine 973–alanine 984 has biased composition (low complexity). Serine 1007 is modified (phosphoserine). Residues glutamate 1048 to proline 1066 are compositionally biased toward polar residues. Residue serine 1081 is modified to Phosphoserine. Positions tyrosine 1118–glycine 1128 are enriched in gly residues.

In terms of assembly, interacts with PBX1, PKNOX1, ZBTB24, E2F7, RING1. Widely expressed in fetal and adult tissues. Highest expression is observed in fetal brain and skeletal muscle, and adult skeletal muscle.

The protein resides in the nucleus. Transcriptional activator which specifically regulates expression of TBX22 in the posterior region of the developing palate. Required during later stages of palate development for growth and medial fusion of the palatal shelves. Promotes maturation and normal function of calvarial osteoblasts, including expression of the osteoclastogenic cytokine TNFSF11/RANKL. Necessary for normal development of the membranous bones of the skull. May play a role in tumor suppression. The chain is Transcriptional activator MN1 (MN1) from Homo sapiens (Human).